The chain runs to 873 residues: F-box only protein 41 (873 aa).

Positions 85 to 97 are enriched in polar residues; sequence ESTSFQGKEQATG. Disordered stretches follow at residues 85-110, 163-193, and 345-540; these read ESTSFQGKEQATGPSPAGPHLLHHHH, SSACSTPPPGPGPGPCSGPSSASPASPSPAD, and SSSC…PSRS. Residues 168 to 178 show a composition bias toward pro residues; the sequence is TPPPGPGPGPC. A compositionally biased stretch (low complexity) spans 179–192; sequence SGPSSASPASPSPA. A coiled-coil region spans residues 207–349; that stretch reads ALEKLEVDRR…QLQVISSSCG (143 aa). The span at 357-371 shows a compositional bias: gly residues; it reads GRGGGGSASGPGVRG. Arg358 is modified (omega-N-methylarginine). 2 stretches are compositionally biased toward polar residues: residues 384 to 414 and 442 to 456; these read VPSTYAVSRHGSSPSTGASSRVPAASQSSGC and AQATNGGSERSQAPR. Residue Ser476 is modified to Phosphoserine. Residue Thr477 is modified to Phosphothreonine. The region spanning 548–592 is the F-box domain; the sequence is ILKMRAALFCIFTYLDTRTLLHAAEVCRDWRFVARHPAVWTRVLL. Phosphoserine is present on Ser760.

As to quaternary structure, directly interacts with SKP1 and CUL1.

Its function is as follows. Substrate-recognition component of the SCF (SKP1-CUL1-F-box protein)-type E3 ubiquitin ligase complex. This chain is F-box only protein 41 (Fbxo41), found in Mus musculus (Mouse).